We begin with the raw amino-acid sequence, 428 residues long: Transcription factor bHLH91 (428 aa).

A bHLH domain is found at 210–259 (KRKNKPFTTERERRCHLNERYEALKLLIPSPSKGDRASILQDGIDYINEL). The disordered stretch occupies residues 278 to 320 (RHKNNEVDDNNNNKNLDDHGNEDDDDDDENMEKKPESDVIDQC). Over residues 297–307 (GNEDDDDDDEN) the composition is skewed to acidic residues.

Homodimer. Flowers.

It localises to the nucleus. This is Transcription factor bHLH91 (BHLH91) from Arabidopsis thaliana (Mouse-ear cress).